A 451-amino-acid chain; its full sequence is GTPase Der (451 aa).

2 consecutive EngA-type G domains span residues 5–170 (PVVA…VEPE) and 186–359 (IKLA…AAAF). GTP is bound by residues 11 to 18 (GRPNVGKS), 58 to 62 (DTGGF), 122 to 125 (NKAE), 192 to 199 (GRPNVGKS), 239 to 243 (DTAGL), and 304 to 307 (NKWD). The 85-residue stretch at 360-444 (AKLSTPKLTR…PLRIEFKSSR (85 aa)) folds into the KH-like domain.

Belongs to the TRAFAC class TrmE-Era-EngA-EngB-Septin-like GTPase superfamily. EngA (Der) GTPase family. Associates with the 50S ribosomal subunit.

Functionally, GTPase that plays an essential role in the late steps of ribosome biogenesis. The polypeptide is GTPase Der (Bordetella petrii (strain ATCC BAA-461 / DSM 12804 / CCUG 43448)).